The chain runs to 555 residues: Neutral amino acid transporter B(0) (555 aa).

N-acetylmethionine is present on methionine 1. Residues 1–52 (MAVDPPKADPKGVVAVDPTANCGSGLKSREDQGAKAGGCCSSRDQVCRCLRA) lie on the Cytoplasmic side of the membrane. Residues 53 to 82 (NLLVLLTVAAAVAGVVLGLGVSAAGGAEAL) traverse the membrane as a helical segment. The Extracellular segment spans residues 83–95 (GHARFTAFAFPGE). Residues 96–117 (LLLRLLEMIILPLVVCSLIGGA) form a helical membrane-spanning segment. Residues 118–131 (ASLDPSALGRLGAW) lie on the Cytoplasmic side of the membrane. The chain crosses the membrane as a helical span at residues 132 to 154 (ALLFFLVTTLLSSALGVALALAL). Over 155–239 (KPGAAFAAIN…SNATMDQPHC (85 aa)) the chain is Extracellular. 2 N-linked (GlcNAc...) asparagine glycosylation sites follow: asparagine 164 and asparagine 231. The helical transmembrane segment at 240-262 (EMKMNILGLVVFAIVFGVALRKL) threads the bilayer. Residues 263–271 (GPEGELLIR) are Cytoplasmic-facing. Residues 272–299 (FFNSFNDATMVLVSWIMWYAPIGILFLV) form a helical membrane-spanning segment. The Extracellular segment spans residues 300-320 (AGKIVEMKDIRQLFIGLGKYI). The chain crosses the membrane as a helical span at residues 321–342 (VCCLLGHAIHGLLVLPLIYFLF). The Cytoplasmic segment spans residues 343–347 (TRKNP). Residues 348–378 (YRFLWGIVTPLATAFGTSSSSATLPLMMKCV) constitute an intramembrane region (discontinuously helical). Residues 379-387 (EEKNGVAKH) are Cytoplasmic-facing. A helical membrane pass occupies residues 388-414 (ISRFILPIGATVNMDGAALFQCVAAVF). Na(+)-binding residues include glycine 396, threonine 398, and asparagine 400. Residues 415–427 (IAQLNGMSLDFVK) are Extracellular-facing. Residues 428-461 (IITILVTATASSVGAAGIPAGGVLTLAIILEAIS) constitute an intramembrane region (discontinuously helical). Residues 462-474 (LPVKDISLILAVD) are Extracellular-facing. A helical transmembrane segment spans residues 475–496 (WLVDRSCTVLNVEGDAFGAGLL). 2 residues coordinate Na(+): asparagine 485 and aspartate 489. Topologically, residues 497-555 (QSYVDRTKMPSSEPELIQVKNDVSLKPLPLATEEGNPLLKQCREPSGDSSATCEKESVM) are cytoplasmic. Serine 507, serine 508, serine 520, serine 545, and serine 553 each carry phosphoserine. A disordered region spans residues 534 to 555 (LLKQCREPSGDSSATCEKESVM).

The protein belongs to the dicarboxylate/amino acid:cation symporter (DAACS) (TC 2.A.23) family. As to quaternary structure, homotrimer.

The protein localises to the cell membrane. It localises to the melanosome. The enzyme catalyses L-glutamine(out) + L-serine(in) + Na(+)(out) = L-glutamine(in) + L-serine(out) + Na(+)(in). It catalyses the reaction L-glutamine(in) + L-serine(out) + Na(+)(out) = L-glutamine(out) + L-serine(in) + Na(+)(in). It carries out the reaction L-threonine(in) + L-glutamine(out) + Na(+)(out) = L-threonine(out) + L-glutamine(in) + Na(+)(in). The catalysed reaction is L-threonine(out) + L-glutamine(in) + Na(+)(out) = L-threonine(in) + L-glutamine(out) + Na(+)(in). The enzyme catalyses L-asparagine(in) + L-glutamine(out) + Na(+)(out) = L-asparagine(out) + L-glutamine(in) + Na(+)(in). It catalyses the reaction L-asparagine(out) + L-glutamine(in) + Na(+)(out) = L-asparagine(in) + L-glutamine(out) + Na(+)(in). It carries out the reaction L-glutamine(in) + L-alanine(out) + Na(+)(out) = L-glutamine(out) + L-alanine(in) + Na(+)(in). The catalysed reaction is L-valine(out) + L-glutamine(in) + Na(+)(out) = L-valine(in) + L-glutamine(out) + Na(+)(in). The enzyme catalyses L-glutamine(in) + L-methionine(out) + Na(+)(out) = L-glutamine(out) + L-methionine(in) + Na(+)(in). It catalyses the reaction L-glutamine(in) + L-glutamate(out) + Na(+)(out) + H(+)(out) = L-glutamine(out) + L-glutamate(in) + Na(+)(in) + H(+)(in). It carries out the reaction D-serine(in) + L-glutamine(out) + Na(+)(out) = D-serine(out) + L-glutamine(in) + Na(+)(in). The catalysed reaction is D-serine(in) + L-alanine(out) + Na(+)(out) = D-serine(out) + L-alanine(in) + Na(+)(in). The enzyme catalyses nitrate(in) = nitrate(out). It catalyses the reaction iodide(out) = iodide(in). It carries out the reaction thiocyanate(in) = thiocyanate(out). Down-regulated at acidic pH. Its function is as follows. Sodium-coupled antiporter of neutral amino acids. In a tri-substrate transport cycle, exchanges neutral amino acids between the extracellular and intracellular compartments, coupled to the inward cotransport of at least one sodium ion. The preferred substrate is the essential amino acid L-glutamine, a precursor for biosynthesis of proteins, nucleotides and amine sugars as well as an alternative fuel for mitochondrial oxidative phosphorylation. Exchanges L-glutamine with other neutral amino acids such as L-serine, L-threonine and L-asparagine in a bidirectional way. Provides L-glutamine to proliferating stem and activated cells driving the metabolic switch toward cell differentiation. The transport cycle is usually pH-independent, with the exception of L-glutamate. Transports extracellular L-glutamate coupled to the cotransport of one proton and one sodium ion in exchange for intracellular L-glutamine counter-ion. May provide for L-glutamate uptake in glial cells regulating glutamine/glutamate cycle in the nervous system. Can transport D-amino acids. Mediates D-serine release from the retinal glia potentially affecting NMDA receptor function in retinal neurons. Displays sodium- and amino acid-dependent but uncoupled channel-like anion conductance with a preference SCN(-) &gt;&gt; NO3(-) &gt; I(-) &gt; Cl(-). Through binding of the fusogenic protein syncytin-1/ERVW-1 may mediate trophoblasts syncytialization, the spontaneous fusion of their plasma membranes, an essential process in placental development. This chain is Neutral amino acid transporter B(0) (Slc1a5), found in Rattus norvegicus (Rat).